We begin with the raw amino-acid sequence, 117 residues long: cAMP-regulated phosphoprotein 19-B (117 aa).

The span at 1-37 shows a compositional bias: basic and acidic residues; the sequence is MSRDNQEIKAPEESSAEEQKEMDDKVTSPEKAEEIKL. The disordered stretch occupies residues 1–54; the sequence is MSRDNQEIKAPEESSAEEQKEMDDKVTSPEKAEEIKLKSRYPNIGPKPGGSDFL. Ser-28 carries the phosphoserine; by CDK2 modification. Ser-67 carries the phosphoserine; by GWL modification. Residues 77 to 117 form a disordered region; sequence MKNKQLPTAAPDKTEVTGDHIPTPQDLPQRKPSLVASKLAG. Phosphothreonine; by CDK2 is present on Thr-99. A Phosphoserine; by PKA modification is found at Ser-109.

The protein belongs to the endosulfine family. Interacts (when phosphorylated at Ser-67) with ppp2r2d. In terms of processing, phosphorylation at Ser-67 by gwl during mitosis is essential for interaction with ppp2r2d (PR55-delta) and subsequent inactivation of PP2A.

Its subcellular location is the cytoplasm. Its function is as follows. Protein phosphatase inhibitor that specifically inhibits protein phosphatase 2A (PP2A) during mitosis. When phosphorylated at Ser-67 during mitosis, specifically interacts with ppp2r2d (PR55-delta) and inhibits its activity, leading to inactivation of PP2A, an essential condition to keep cyclin-B1-CDK1 activity high during M phase. The polypeptide is cAMP-regulated phosphoprotein 19-B (arpp19-b) (Xenopus laevis (African clawed frog)).